The following is a 934-amino-acid chain: AP-2 complex subunit alpha (934 aa).

The disordered stretch occupies residues 623–670 (RVPENAEIRETKSPVPNSHNNAHSNAQTNHTSSANNANASSDLLGLST). Over residues 636–645 (PVPNSHNNAH) the composition is skewed to polar residues. The segment covering 646-663 (SNAQTNHTSSANNANASS) has biased composition (low complexity).

This sequence belongs to the adapter complexes large subunit family. As to quaternary structure, adaptor protein complex 2 (AP-2) is a heterotetramer composed of two large adaptins (alpha-type and beta-type subunits), a medium adaptin (mu-type subunit AP50) and a small adaptin (sigma-type subunit AP17).

Its subcellular location is the cell membrane. The protein resides in the membrane. The protein localises to the coated pit. Its function is as follows. Adaptins are components of the adapter complexes which link clathrin to receptors in coated vesicles. Clathrin-associated protein complexes are believed to interact with the cytoplasmic tails of membrane proteins, leading to their selection and concentration. Alpha adaptin is a subunit of the plasma membrane adapter. This is AP-2 complex subunit alpha from Anopheles gambiae (African malaria mosquito).